Reading from the N-terminus, the 115-residue chain is SOSS complex subunit C homolog (115 aa).

This sequence belongs to the SOSS-C family.

The sequence is that of SOSS complex subunit C homolog from Drosophila mojavensis (Fruit fly).